Consider the following 556-residue polypeptide: CDP-diacylglycerol--glycerol-3-phosphate 3-phosphatidyltransferase, mitochondrial (556 aa).

The transit peptide at 1 to 28 directs the protein to the mitochondrion; it reads MAAAAAAAAGPVFWRRLLGLLPGRPGLA. S49 is subject to Phosphoserine. 124–131 is a binding site for ATP; sequence ASLYLGIG. 2 consecutive PLD phosphodiesterase domains span residues 215–241 and 419–457; these read TIGLQHIKVYLFDNNVILSGANLSDSY and FGAKGVAGAIPAAYVHIERQFYSEVCSLGQQERVQLQEY. Residues H220, K222, and D227 contribute to the active site.

Belongs to the CDP-alcohol phosphatidyltransferase class-II family.

It localises to the mitochondrion. It catalyses the reaction a CDP-1,2-diacyl-sn-glycerol + sn-glycerol 3-phosphate = a 1,2-diacyl-sn-glycero-3-phospho-(1'-sn-glycero-3'-phosphate) + CMP + H(+). Its pathway is phospholipid metabolism; phosphatidylglycerol biosynthesis; phosphatidylglycerol from CDP-diacylglycerol: step 1/2. With respect to regulation, activated by calcium and magnesium and inhibited by other bivalent cations. In terms of biological role, functions in the biosynthesis of the anionic phospholipids phosphatidylglycerol and cardiolipin. The sequence is that of CDP-diacylglycerol--glycerol-3-phosphate 3-phosphatidyltransferase, mitochondrial (PGS1) from Bos taurus (Bovine).